A 492-amino-acid polypeptide reads, in one-letter code: Probable cobyric acid synthase (492 aa).

In terms of domain architecture, GATase cobBQ-type spans 252-444; that stretch reads PIEVNIVKFS…FHGILENFEF (193 aa). Cysteine 330 (nucleophile) is an active-site residue. Histidine 436 is a catalytic residue.

The protein belongs to the CobB/CobQ family. CobQ subfamily.

The protein operates within cofactor biosynthesis; adenosylcobalamin biosynthesis. Its function is as follows. Catalyzes amidations at positions B, D, E, and G on adenosylcobyrinic A,C-diamide. NH(2) groups are provided by glutamine, and one molecule of ATP is hydrogenolyzed for each amidation. The polypeptide is Probable cobyric acid synthase (Methanococcus maripaludis (strain C7 / ATCC BAA-1331)).